Consider the following 189-residue polypeptide: Peptidyl-tRNA hydrolase (189 aa).

Tyrosine 16 contacts tRNA. Histidine 21 functions as the Proton acceptor in the catalytic mechanism. TRNA is bound by residues phenylalanine 67, asparagine 69, and asparagine 115.

It belongs to the PTH family. In terms of assembly, monomer.

It is found in the cytoplasm. The enzyme catalyses an N-acyl-L-alpha-aminoacyl-tRNA + H2O = an N-acyl-L-amino acid + a tRNA + H(+). Hydrolyzes ribosome-free peptidyl-tRNAs (with 1 or more amino acids incorporated), which drop off the ribosome during protein synthesis, or as a result of ribosome stalling. Its function is as follows. Catalyzes the release of premature peptidyl moieties from peptidyl-tRNA molecules trapped in stalled 50S ribosomal subunits, and thus maintains levels of free tRNAs and 50S ribosomes. The protein is Peptidyl-tRNA hydrolase of Legionella pneumophila subsp. pneumophila (strain Philadelphia 1 / ATCC 33152 / DSM 7513).